The sequence spans 335 residues: G-protein coupled receptor 157 (335 aa).

Over 1 to 15 (MQPSPPPTELVPSER) the chain is Extracellular. Residues 16-36 (AVVLLSCALSALGSGLLVATH) form a helical membrane-spanning segment. Over 37–48 (ALWPDLRSRARR) the chain is Cytoplasmic. Residues 49-69 (LLLFLSLADLLSAASYFYGVL) traverse the membrane as a helical segment. The Extracellular portion of the chain corresponds to 70–87 (QNFAGPSWDCVLQGALST). A helical membrane pass occupies residues 88 to 108 (FANTSSFFWTVAIALYLYLSI). Over 109 to 119 (VRAARGPRTDR) the chain is Cytoplasmic. A helical membrane pass occupies residues 120–140 (LLWAFHVVSWGVPLVITVAAV). The Extracellular portion of the chain corresponds to 141–166 (ALKKIGYDASDVSVGWCWIDLEAKDH). Residues 167-187 (VLWMLLTGKLWEMLAYVLLPL) traverse the membrane as a helical segment. Topologically, residues 188–226 (LYLLVRKHINRAHTALSEYRPILSQEHRLLRHSSMADKK) are cytoplasmic. A helical transmembrane segment spans residues 227–247 (LVLIPLIFIGLRVWSTVRFVL). Topologically, residues 248-258 (TLCGSPAVQTP) are extracellular. The chain crosses the membrane as a helical span at residues 259-279 (VLVVLHGIGNTFQGGANCIMF). The Cytoplasmic portion of the chain corresponds to 280–335 (VLCTRAVRTRLFSLCCCCCSSQPPTKSPAGTPKAPAPSKPGESQESQGTPGELPST). Residues 300-335 (SQPPTKSPAGTPKAPAPSKPGESQESQGTPGELPST) form a disordered region. Residues 320 to 335 (GESQESQGTPGELPST) are compositionally biased toward polar residues.

This sequence belongs to the G-protein coupled receptor 2 family.

The protein resides in the cell projection. Its subcellular location is the cilium membrane. Functionally, orphan receptor that promotes neuronal differentiation of radial glial progenitors (RGPs). The activity of this receptor is mediated by a G(q)-protein that activates a phosphatidylinositol-calcium second messenger. The protein is G-protein coupled receptor 157 (GPR157) of Homo sapiens (Human).